We begin with the raw amino-acid sequence, 305 residues long: E3 ubiquitin-protein ligase RNF115 (305 aa).

A2 carries the post-translational modification N-acetylalanine. A compositionally biased stretch (basic and acidic residues) spans N100–H110. Residues N100 to S139 form a disordered region. S133 is modified (phosphoserine). Residues C229–R270 form an RING-type zinc finger. Positions N274 to F305 are disordered. Positions R280–S297 are enriched in polar residues.

Interacts with RAB7A. Interacts with EGFR and FLT3. Interacts with BST2. Interacts with STX17. Interacts with YWHAE. Phosphorylated by AKT1, allowing association with the 14-3-3 chaperones that facilitates associating with TLRs. Post-translationally, deubiquitinated by USP9X; antogonizing its autoubiquitination and subsequent proteasomal degradation. In terms of processing, RING-type zinc finger-dependent and E2-dependent autoubiquitination.

Its subcellular location is the cytoplasm. The protein resides in the cytoplasmic vesicle. It localises to the phagosome. It is found in the nucleus. The protein localises to the endoplasmic reticulum. Its subcellular location is the golgi apparatus. The enzyme catalyses S-ubiquitinyl-[E2 ubiquitin-conjugating enzyme]-L-cysteine + [acceptor protein]-L-lysine = [E2 ubiquitin-conjugating enzyme]-L-cysteine + N(6)-ubiquitinyl-[acceptor protein]-L-lysine.. It functions in the pathway protein modification; protein ubiquitination. E3 ubiquitin-protein ligase that catalyzes the 'Lys-48'- and/or 'Lys-63'-linked polyubiquitination of various substrates and thereby plays a role in a number of signaling pathways including autophagy, innate immunity, cell proliferation and cell death. Plays a role in the endosomal trafficking and degradation of membrane receptors including EGFR, FLT3, MET and CXCR4 through their polyubiquitination. Participates together with BST2 in antiviral immunity by facilitating the internalization of HIV-1 virions into intracellular vesicles leading to their lysosomal degradation. Also possesses an antiviral activity independently of BST2 by promoting retroviral GAG proteins ubiquitination, redistribution to endo-lysosomal compartments and, ultimately, lysosomal degradation. Catalyzes distinct types of ubiquitination on MAVS and STING1 at different phases of viral infection to promote innate antiviral response. Mediates the 'Lys-48'-linked ubiquitination of MAVS leading to its proteasomal degradation and ubiquitinates STING1 via 'Lys-63'-linked polyubiquitination, critical for its oligomerization and the subsequent recruitment of TBK1. Plays a positive role in the autophagosome-lysosome fusion by interacting with STX17 and enhancing its stability without affecting 'Lys-48'- or 'Lys-63'-linked polyubiquitination levels, which in turn promotes autophagosome maturation. Negatively regulates TLR-induced expression of proinflammatory cytokines by catalyzing 'Lys-11'-linked ubiquitination of RAB1A and RAB13 to inhibit post-ER trafficking of TLRs to the Golgi by RAB1A and subsequently from the Golgi apparatus to the cell surface by RAB13. The chain is E3 ubiquitin-protein ligase RNF115 from Mus musculus (Mouse).